The chain runs to 732 residues: Phosphoribosylformylglycinamidine synthase subunit PurL (732 aa).

H32 is an active-site residue. Y35 is an ATP binding site. Position 81 (E81) interacts with Mg(2+). Substrate is bound by residues 82 to 85 and R104; that span reads SHNH. Catalysis depends on H83, which acts as the Proton acceptor. Mg(2+) is bound at residue D105. Q230 serves as a coordination point for substrate. Position 258 (D258) interacts with Mg(2+). 302–304 serves as a coordination point for substrate; that stretch reads ESQ. Residues D485 and G522 each coordinate ATP. N523 is a binding site for Mg(2+). S525 lines the substrate pocket.

It belongs to the FGAMS family. Monomer. Part of the FGAM synthase complex composed of 1 PurL, 1 PurQ and 2 PurS subunits.

It localises to the cytoplasm. It catalyses the reaction N(2)-formyl-N(1)-(5-phospho-beta-D-ribosyl)glycinamide + L-glutamine + ATP + H2O = 2-formamido-N(1)-(5-O-phospho-beta-D-ribosyl)acetamidine + L-glutamate + ADP + phosphate + H(+). The protein operates within purine metabolism; IMP biosynthesis via de novo pathway; 5-amino-1-(5-phospho-D-ribosyl)imidazole from N(2)-formyl-N(1)-(5-phospho-D-ribosyl)glycinamide: step 1/2. Part of the phosphoribosylformylglycinamidine synthase complex involved in the purines biosynthetic pathway. Catalyzes the ATP-dependent conversion of formylglycinamide ribonucleotide (FGAR) and glutamine to yield formylglycinamidine ribonucleotide (FGAM) and glutamate. The FGAM synthase complex is composed of three subunits. PurQ produces an ammonia molecule by converting glutamine to glutamate. PurL transfers the ammonia molecule to FGAR to form FGAM in an ATP-dependent manner. PurS interacts with PurQ and PurL and is thought to assist in the transfer of the ammonia molecule from PurQ to PurL. The sequence is that of Phosphoribosylformylglycinamidine synthase subunit PurL from Methanococcus aeolicus (strain ATCC BAA-1280 / DSM 17508 / OCM 812 / Nankai-3).